Consider the following 153-residue polypeptide: RNA-binding protein OPG065 (153 aa).

Residues 1–33 (MEKREVNKALYDLQRSAMVYSSNDTPPRWSTTM) form the Z-binding domain. Residues 22 to 34 (SNDTPPRWSTTMD) show a composition bias toward polar residues. Positions 22-44 (SNDTPPRWSTTMDADTRPTDSDA) are disordered. The DRBM domain occupies 80–147 (NPVTVINEYC…AKLAVDKLLS (68 aa)).

The protein belongs to the orthopoxvirus OPG065 family. Interacts with host G1P2/ISG15. Interacts with host EIF2AK2/PKR. Interacts with host ZBP1.

Its function is as follows. RNA-binding protein that plays a role in the inhibition of multiple cellular antiviral responses activated by double-stranded RNA (dsRNA), such as inhibition of PKR activation, necroptosis, and IFN-mediated antiviral activities. Recognizes and binds Z-RNA structures via its Z-binding domain and dsRNA via its DRBM domain: RNA-binding activity is required to escape host ZBP1-dependent necroptosis. Mechanistically, the Z-binding domain binds Z-RNAs that are produced during vaccinia virus infection, thereby competing with Z-RNA detection by host ZBP1, suppressing ZBP1-dependent necroptosis. Acts as a key inhibitor of the interferon response by blocking the phosphorylation and subsequent activation of IRF3 and IRF7 kinases that are required for interferon-alpha gene expression. Inhibits NF-kappa-B activation and the ubiquitin-like protein ISG15, which is an early antiviral protein. The binding with host ISG15 subsequently blocks host ISGylation. This chain is RNA-binding protein OPG065 (OPG065), found in Monkeypox virus.